Consider the following 316-residue polypeptide: MNTILTCQDEYFAGGLGYDCPYFSSTSASTVDVSKETWVSLWASGLLDNRSSNHGPHTQGQLYNMGNSLQEDYLFGDQLSSQISANKQLQDTLLQKEEELSRLHEENNKLKEFLNSAFVKTLAEKTKKLLHQNGQSSFCTNPNSRVPFSSNSTPGSKAKRARRNLYGELTACEAQSSPVVEKWVLQTLGLKDVDTIDDSALANYSAMSLQPKQDSPSSGYSSAHLTPGHSQAATSCSLSPSQCSSASLPESETASPLSSPTYHTPDVAPNKTEVAFSTSLHPHCNVKTHSFPQGQAFVRRDTQGGWKFTWVPKQSE.

The stretch at 82–117 (QISANKQLQDTLLQKEEELSRLHEENNKLKEFLNSA) forms a coiled coil. 2 stretches are compositionally biased toward polar residues: residues 134–155 (GQSS…STPG) and 207–234 (MSLQ…QAAT). 2 disordered regions span residues 134-160 (GQSS…KAKR) and 207-269 (MSLQ…DVAP). Thr-153 is subject to Phosphothreonine; by cdk2. The span at 235–252 (SCSLSPSQCSSASLPESE) shows a compositional bias: low complexity. A compositionally biased stretch (polar residues) spans 253-262 (TASPLSSPTY).

Belongs to the GEMC1 family. Interacts with topbp1. Interacts with Cdc45l and the kinase cdk2-cyclin-E (the interaction is direct). Highly phosphorylated by cdk2; stimulates initiation of DNA replication. As to expression, expressed in most tissues. Enriched in proliferating cells from skin and gut.

Its subcellular location is the nucleus. Functionally, regulator of DNA replication. Promotes initiation of chromosomal DNA replication by mediating topbp1- and cdk2-dependent recruitment of cdc45l onto replication origins. The protein is Geminin coiled-coil domain-containing protein 1 (gmnc) of Xenopus laevis (African clawed frog).